We begin with the raw amino-acid sequence, 241 residues long: GTP cyclohydrolase 1 type 2 homolog (241 aa).

5 residues coordinate a divalent metal cation: His62, His63, Asp101, His207, and Glu211.

This sequence belongs to the GTP cyclohydrolase I type 2/NIF3 family. Homohexamer.

The protein is GTP cyclohydrolase 1 type 2 homolog of Campylobacter jejuni subsp. jejuni serotype O:2 (strain ATCC 700819 / NCTC 11168).